We begin with the raw amino-acid sequence, 285 residues long: Glutamate racemase (285 aa).

Residues 30–31 and 62–63 contribute to the substrate site; these read DS and YG. The active-site Proton donor/acceptor is the Cys-94. 95–96 is a binding site for substrate; it reads NT. Residue Cys-206 is the Proton donor/acceptor of the active site. 207-208 provides a ligand contact to substrate; the sequence is TH.

Belongs to the aspartate/glutamate racemases family.

The enzyme catalyses L-glutamate = D-glutamate. It participates in cell wall biogenesis; peptidoglycan biosynthesis. Functionally, provides the (R)-glutamate required for cell wall biosynthesis. This Pectobacterium carotovorum subsp. carotovorum (strain PC1) protein is Glutamate racemase.